A 396-amino-acid chain; its full sequence is THAP domain-containing protein 5 (396 aa).

The THAP-type zinc finger occupies Met2–Phe85. The disordered stretch occupies residues Ser86–Cys113. Residues Asn91–Cys113 are compositionally biased toward basic and acidic residues. The short motif at Glu322–Tyr325 is the HCFC1-binding motif (HBM) element. Positions Leu349–Lys382 form a coiled coil.

As to quaternary structure, interacts with HTRA2; under apoptotic conditions. Interacts with ABRAXAS2. Cleaved by HTRA2 during apoptosis.

Its subcellular location is the nucleus. Has sequence-specific DNA-binding activity and can function as transcriptional repressor (in vitro). May be a regulator of cell cycle: THAP5 overexpression in human cell lines causes cell cycle arrest at G2/M phase. This chain is THAP domain-containing protein 5 (THAP5), found in Macaca fascicularis (Crab-eating macaque).